Reading from the N-terminus, the 193-residue chain is MAAGPALVLASASPRRLDLLAQVGVTPDRVDPADIDETPLRDETPRRHALRLALEKARVVAARAPGDFVLAADTVVAVGRRILPKAETEADVLYCLKLLSGRNHKVLTGVALIAPDGRAATRLVETKVGFKRLSDAERDGYVASGQWRGKAGGYGVQGLAGGFITDLQGSYPSVVGLPLYETLNLLSGLGYRP.

Asp-73 serves as the catalytic Proton acceptor.

The protein belongs to the Maf family. YhdE subfamily. The cofactor is a divalent metal cation.

Its subcellular location is the cytoplasm. The catalysed reaction is dTTP + H2O = dTMP + diphosphate + H(+). The enzyme catalyses UTP + H2O = UMP + diphosphate + H(+). Functionally, nucleoside triphosphate pyrophosphatase that hydrolyzes dTTP and UTP. May have a dual role in cell division arrest and in preventing the incorporation of modified nucleotides into cellular nucleic acids. In Caulobacter vibrioides (strain ATCC 19089 / CIP 103742 / CB 15) (Caulobacter crescentus), this protein is dTTP/UTP pyrophosphatase.